The primary structure comprises 270 residues: Putative pyruvate, phosphate dikinase regulatory protein (270 aa).

148–155 provides a ligand contact to ADP; it reads GVSRTSKT.

It belongs to the pyruvate, phosphate/water dikinase regulatory protein family. PDRP subfamily.

It carries out the reaction N(tele)-phospho-L-histidyl/L-threonyl-[pyruvate, phosphate dikinase] + ADP = N(tele)-phospho-L-histidyl/O-phospho-L-threonyl-[pyruvate, phosphate dikinase] + AMP + H(+). It catalyses the reaction N(tele)-phospho-L-histidyl/O-phospho-L-threonyl-[pyruvate, phosphate dikinase] + phosphate + H(+) = N(tele)-phospho-L-histidyl/L-threonyl-[pyruvate, phosphate dikinase] + diphosphate. Bifunctional serine/threonine kinase and phosphorylase involved in the regulation of the pyruvate, phosphate dikinase (PPDK) by catalyzing its phosphorylation/dephosphorylation. This Bacillus cereus (strain B4264) protein is Putative pyruvate, phosphate dikinase regulatory protein.